The chain runs to 309 residues: RHOMBOID-like protein 5 (309 aa).

The next 7 membrane-spanning stretches (helical) occupy residues 27–47, 113–133, 140–160, 170–190, 200–220, 222–242, and 274–294; these read IPVP…FVTF, IWLH…MCIG, FGFM…SLVS, VSVG…SELI, CTAL…GFLP, VDNS…FVLL, and IFRF…YTKL. Catalysis depends on serine 175, which acts as the Nucleophile. Histidine 227 functions as the Charge relay system in the catalytic mechanism.

The protein belongs to the peptidase S54 family.

Its subcellular location is the membrane. The catalysed reaction is Cleaves type-1 transmembrane domains using a catalytic dyad composed of serine and histidine that are contributed by different transmembrane domains.. Its function is as follows. Probable rhomboid-type serine protease that catalyzes intramembrane proteolysis. May function in reproductive organs maturation. The sequence is that of RHOMBOID-like protein 5 from Arabidopsis thaliana (Mouse-ear cress).